Here is a 175-residue protein sequence, read N- to C-terminus: NADH-ubiquinone oxidoreductase chain 6 (175 aa).

5 consecutive transmembrane segments (helical) span residues 1-21 (MTMY…VGFS), 25-45 (SPIY…GIVL), 47-67 (FGGS…MLVV), 88-108 (TVFG…YYAL), and 149-169 (YGTW…VVIM).

It belongs to the complex I subunit 6 family. In terms of assembly, core subunit of respiratory chain NADH dehydrogenase (Complex I) which is composed of 45 different subunits.

It localises to the mitochondrion inner membrane. It carries out the reaction a ubiquinone + NADH + 5 H(+)(in) = a ubiquinol + NAD(+) + 4 H(+)(out). In terms of biological role, core subunit of the mitochondrial membrane respiratory chain NADH dehydrogenase (Complex I) which catalyzes electron transfer from NADH through the respiratory chain, using ubiquinone as an electron acceptor. Essential for the catalytic activity and assembly of complex I. This is NADH-ubiquinone oxidoreductase chain 6 (MT-ND6) from Sus scrofa (Pig).